Reading from the N-terminus, the 499-residue chain is MEFSTQTTASLHQIKTAALAVGVFADGVLSAAAEVIDRASHGAVAAVVKSEFRGRTGSTLVLRSLAGVSAQRVVLVGLGKQAEYNARAHASAEQAFAAACVAAQVGEGVSTLAGVAIEGVPVRARARSAAIAAGAAAYHYDATFGKANRDARPRLKKIVQVVDRAASAQAQLGLREGAAIAHGMELTRTLGNLPGNVCTPAYLGNTAKKLAREFKSLKVEVLERKQVEALGMGSFLSVARGSEEPLRFIVLRHAGKPAKKDKAGPVVLVGKGITFDAGGISLKPAATMDEMKYDMCGAASVLGTFRALAELELPLDVVGLIAACENLPSGKANKPGDVVTSMSGQTIEILNTDAEGRLVLCDALTYAERFKPAAVIDIATLTGACVVALGNVNSGLFSKDDALADALLAASRQSLDPAWRLPLDDAYQDQLKSNFADIANIGGPPAGAVTAACFLSRFTKAYPWAHLDIAGTAWRGGKDKGATGRPVPLLMQYLLDQAG.

Mn(2+) is bound by residues Lys-271 and Asp-276. Lys-283 is a catalytic residue. The Mn(2+) site is built by Asp-294, Asp-353, and Glu-355. The active site involves Arg-357.

This sequence belongs to the peptidase M17 family. Mn(2+) is required as a cofactor.

The protein localises to the cytoplasm. It carries out the reaction Release of an N-terminal amino acid, Xaa-|-Yaa-, in which Xaa is preferably Leu, but may be other amino acids including Pro although not Arg or Lys, and Yaa may be Pro. Amino acid amides and methyl esters are also readily hydrolyzed, but rates on arylamides are exceedingly low.. The catalysed reaction is Release of an N-terminal amino acid, preferentially leucine, but not glutamic or aspartic acids.. Its function is as follows. Presumably involved in the processing and regular turnover of intracellular proteins. Catalyzes the removal of unsubstituted N-terminal amino acids from various peptides. The sequence is that of Probable cytosol aminopeptidase from Bordetella bronchiseptica (strain ATCC BAA-588 / NCTC 13252 / RB50) (Alcaligenes bronchisepticus).